Here is a 742-residue protein sequence, read N- to C-terminus: Hapless 2 (742 aa).

A signal peptide spans 1–19; the sequence is MKFLAFGLIYFHFCILNRC. Topologically, residues 20–540 are extracellular; that stretch reads EYITSSTIQK…CYFSAGCIKE (521 aa). Cystine bridges form between cysteine 30–cysteine 40, cysteine 118–cysteine 147, cysteine 129–cysteine 182, cysteine 148–cysteine 312, cysteine 150–cysteine 168, cysteine 295–cysteine 319, and cysteine 431–cysteine 470. The tract at residues 152–179 is important for membrane fusion; the sequence is LSDILGMGNDLSRGKVCYALNLGAGSAT. A helical transmembrane segment spans residues 541–561; it reads AFKSIASIAGVASALALVIFL. Residues 562 to 742 are Cytoplasmic-facing; it reads AKNGYLVPII…STSPLYLLIE (181 aa).

Belongs to the HAP2/GCS1 family.

The protein resides in the cell membrane. It is found in the cell junction. During fertilization, required for the formation of intercellular membrane pores and subsequent exchange of gametic pronuclei between cells. Probably initiates the formation of intercellular membrane pores by inserting part of its extracellular domain into the cell membrane of the adjoining cell in the mating pair. Mating requires the presence of HAP2 on at least one of the two cells. Mating efficiency is high when HAP2 is present on both cells, and is strongly reduced when HAP2 is present on only one of the two cells. In Tetrahymena thermophila, this protein is Hapless 2.